A 360-amino-acid polypeptide reads, in one-letter code: Phospho-N-acetylmuramoyl-pentapeptide-transferase (360 aa).

Transmembrane regions (helical) follow at residues 25 to 45, 71 to 91, 94 to 114, 129 to 148, 168 to 188, 199 to 219, 239 to 259, 263 to 283, 288 to 308, and 337 to 357; these read TGGA…WIID, TPTM…VLWA, LNPY…VGFY, SGRT…CYAL, TAIY…VGAG, GLAI…SYLA, LAVL…FNAP, IFMG…IAVA, FVLA…IVQV, and QIVI…LSTL.

Belongs to the glycosyltransferase 4 family. MraY subfamily. Mg(2+) serves as cofactor.

Its subcellular location is the cell inner membrane. It carries out the reaction UDP-N-acetyl-alpha-D-muramoyl-L-alanyl-gamma-D-glutamyl-meso-2,6-diaminopimeloyl-D-alanyl-D-alanine + di-trans,octa-cis-undecaprenyl phosphate = di-trans,octa-cis-undecaprenyl diphospho-N-acetyl-alpha-D-muramoyl-L-alanyl-D-glutamyl-meso-2,6-diaminopimeloyl-D-alanyl-D-alanine + UMP. It functions in the pathway cell wall biogenesis; peptidoglycan biosynthesis. Its function is as follows. Catalyzes the initial step of the lipid cycle reactions in the biosynthesis of the cell wall peptidoglycan: transfers peptidoglycan precursor phospho-MurNAc-pentapeptide from UDP-MurNAc-pentapeptide onto the lipid carrier undecaprenyl phosphate, yielding undecaprenyl-pyrophosphoryl-MurNAc-pentapeptide, known as lipid I. This Rhodopseudomonas palustris (strain BisA53) protein is Phospho-N-acetylmuramoyl-pentapeptide-transferase.